The chain runs to 548 residues: MFCYQCQETAQGKGCTLKGVCGKTAEVAGLQDLLMYLMKGISKLTTTLRKQGVESSTANKFIVDGLFMTITNANFDSSRFVSKIKEAYQLRENLLNELHRLGIHLSLTCDCLTWKSDKVEEMEVKAKEVGILATENEDIRSLCELLTYGVKGMAAYVEHAYNLGFEDTSLYAFMQDALVATTRSDLTVADLTQWVLTCGEYGVKAMALLDKANTSTYGNPEITKVNIGVGKNPGILISGHDLRDIQDLLEQTEGTGIDVYTHGEMLPAHYYPAFKKYKHFVGNYGSAWWKQTSDFETFNGVILFTTNCLVPPRSSATYADRVYTTGSTGFEGFPHIADRKPGGSKDFSALIEHAKKCAPPTEIEHGEIIGGFAHEQVFQLADKVIDAVKSGAIRKFFVMAGCDGRMKSRSYYTEFAEKLPKDTVILTAGCAKYRYNKLPLGEIRGIPRVLDAGQCNDSYSLVMIALKLKEIFGLDDVNELPIAYNIAWYEQKAVIVLLALLYLGVKNIHLGPTLPAFLSPNVAKVLVDNFGIAGIGSVDEDMELFLGK.

[4Fe-4S] cluster-binding residues include cysteine 3, cysteine 6, cysteine 15, and cysteine 21. Histidine 240, glutamate 264, cysteine 308, cysteine 402, cysteine 430, cysteine 455, glutamate 490, and lysine 492 together coordinate hybrid [4Fe-2O-2S] cluster. The residue at position 402 (cysteine 402) is a Cysteine persulfide.

It belongs to the HCP family. [4Fe-4S] cluster is required as a cofactor. Requires hybrid [4Fe-2O-2S] cluster as cofactor.

The protein localises to the cytoplasm. The enzyme catalyses A + NH4(+) + H2O = hydroxylamine + AH2 + H(+). Its function is as follows. Catalyzes the reduction of hydroxylamine to form NH(3) and H(2)O. In Parabacteroides distasonis (strain ATCC 8503 / DSM 20701 / CIP 104284 / JCM 5825 / NCTC 11152), this protein is Hydroxylamine reductase.